A 213-amino-acid chain; its full sequence is Validoxylamine A 7'-phosphate phosphatase (213 aa).

Aspartate 8 functions as the Nucleophile in the catalytic mechanism. Residues aspartate 8 and aspartate 10 each coordinate a divalent metal cation. Substrate is bound by residues 8–10, 107–108, and lysine 140; these read DLD and TS. The active-site Proton donor is aspartate 10. Aspartate 165 contacts a divalent metal cation.

The protein belongs to the HAD-like hydrolase superfamily. CbbY/CbbZ/Gph/YieH family. Mg(2+) is required as a cofactor. Mn(2+) serves as cofactor. The cofactor is Co(2+).

The catalysed reaction is validoxylamine A 7'-phosphate + H2O = validoxylamine A + phosphate. Its function is as follows. Involved in the biosynthesis of the antifungal agent validamycin A. Catalyzes the dephosphorylation of validoxylamine A 7'-phosphate to yield validoxylamine A. VldH is also able to convert trehalose 6-phosphate to trehalose. The polypeptide is Validoxylamine A 7'-phosphate phosphatase (Streptomyces hygroscopicus subsp. limoneus).